Consider the following 78-residue polypeptide: MGSLSIWHWIVVVAVILLLFGRGKISDLMGDVAQGIKAFKKGMKDDEKTAEKPEPVKTINHNADGSGAARSDTGSKVI.

The chain crosses the membrane as a helical span at residues 1–21 (MGSLSIWHWIVVVAVILLLFG). Positions 43 to 55 (MKDDEKTAEKPEP) are enriched in basic and acidic residues. The interval 43-78 (MKDDEKTAEKPEPVKTINHNADGSGAARSDTGSKVI) is disordered.

The protein belongs to the TatA/E family. In terms of assembly, the Tat system comprises two distinct complexes: a TatABC complex, containing multiple copies of TatA, TatB and TatC subunits, and a separate TatA complex, containing only TatA subunits. Substrates initially bind to the TatABC complex, which probably triggers association of the separate TatA complex to form the active translocon.

The protein resides in the cell inner membrane. Functionally, part of the twin-arginine translocation (Tat) system that transports large folded proteins containing a characteristic twin-arginine motif in their signal peptide across membranes. TatA could form the protein-conducting channel of the Tat system. The protein is Sec-independent protein translocase protein TatA of Nitrobacter winogradskyi (strain ATCC 25391 / DSM 10237 / CIP 104748 / NCIMB 11846 / Nb-255).